Here is a 231-residue protein sequence, read N- to C-terminus: Phosphatidylserine decarboxylase proenzyme (231 aa).

S188 acts as the Schiff-base intermediate with substrate; via pyruvic acid in catalysis. S188 carries the post-translational modification Pyruvic acid (Ser); by autocatalysis.

It belongs to the phosphatidylserine decarboxylase family. PSD-A subfamily. In terms of assembly, heterodimer of a large membrane-associated beta subunit and a small pyruvoyl-containing alpha subunit. It depends on pyruvate as a cofactor. Is synthesized initially as an inactive proenzyme. Formation of the active enzyme involves a self-maturation process in which the active site pyruvoyl group is generated from an internal serine residue via an autocatalytic post-translational modification. Two non-identical subunits are generated from the proenzyme in this reaction, and the pyruvate is formed at the N-terminus of the alpha chain, which is derived from the carboxyl end of the proenzyme. The post-translation cleavage follows an unusual pathway, termed non-hydrolytic serinolysis, in which the side chain hydroxyl group of the serine supplies its oxygen atom to form the C-terminus of the beta chain, while the remainder of the serine residue undergoes an oxidative deamination to produce ammonia and the pyruvoyl prosthetic group on the alpha chain.

The protein resides in the cell membrane. It carries out the reaction a 1,2-diacyl-sn-glycero-3-phospho-L-serine + H(+) = a 1,2-diacyl-sn-glycero-3-phosphoethanolamine + CO2. It functions in the pathway phospholipid metabolism; phosphatidylethanolamine biosynthesis; phosphatidylethanolamine from CDP-diacylglycerol: step 2/2. In terms of biological role, catalyzes the formation of phosphatidylethanolamine (PtdEtn) from phosphatidylserine (PtdSer). The protein is Phosphatidylserine decarboxylase proenzyme of Rickettsia felis (strain ATCC VR-1525 / URRWXCal2) (Rickettsia azadi).